Reading from the N-terminus, the 39-residue chain is Photosystem II reaction center protein Y (39 aa).

Residues 5–23 (VLVVVGPLLIAASWAVFNI) form a helical membrane-spanning segment.

This sequence belongs to the PsbY family. In terms of assembly, PSII is composed of 1 copy each of membrane proteins PsbA, PsbB, PsbC, PsbD, PsbE, PsbF, PsbH, PsbI, PsbJ, PsbK, PsbL, PsbM, PsbT, PsbX, PsbY, PsbZ, Psb30/Ycf12, peripheral proteins PsbO, CyanoQ (PsbQ), PsbU, PsbV and a large number of cofactors. It forms dimeric complexes.

The protein localises to the cellular thylakoid membrane. Its function is as follows. Loosely associated component of the core of photosystem II (PSII), it is not always seen in crystals. PSII is a light-driven water plastoquinone oxidoreductase, using light energy to abstract electrons from H(2)O, generating a proton gradient subsequently used for ATP formation. This Rippkaea orientalis (strain PCC 8801 / RF-1) (Cyanothece sp. (strain PCC 8801)) protein is Photosystem II reaction center protein Y.